The chain runs to 469 residues: 3-isopropylmalate dehydratase large subunit (469 aa).

[4Fe-4S] cluster contacts are provided by Cys347, Cys408, and Cys411.

This sequence belongs to the aconitase/IPM isomerase family. LeuC type 1 subfamily. Heterodimer of LeuC and LeuD. [4Fe-4S] cluster serves as cofactor.

It carries out the reaction (2R,3S)-3-isopropylmalate = (2S)-2-isopropylmalate. It participates in amino-acid biosynthesis; L-leucine biosynthesis; L-leucine from 3-methyl-2-oxobutanoate: step 2/4. Its function is as follows. Catalyzes the isomerization between 2-isopropylmalate and 3-isopropylmalate, via the formation of 2-isopropylmaleate. The sequence is that of 3-isopropylmalate dehydratase large subunit from Actinobacillus succinogenes (strain ATCC 55618 / DSM 22257 / CCUG 43843 / 130Z).